A 251-amino-acid chain; its full sequence is Ubiquinone/menaquinone biosynthesis C-methyltransferase UbiE (251 aa).

Residues threonine 74, aspartate 95, 123–124, and serine 140 contribute to the S-adenosyl-L-methionine site; that span reads NA.

The protein belongs to the class I-like SAM-binding methyltransferase superfamily. MenG/UbiE family.

It catalyses the reaction a 2-demethylmenaquinol + S-adenosyl-L-methionine = a menaquinol + S-adenosyl-L-homocysteine + H(+). The catalysed reaction is a 2-methoxy-6-(all-trans-polyprenyl)benzene-1,4-diol + S-adenosyl-L-methionine = a 5-methoxy-2-methyl-3-(all-trans-polyprenyl)benzene-1,4-diol + S-adenosyl-L-homocysteine + H(+). It functions in the pathway quinol/quinone metabolism; menaquinone biosynthesis; menaquinol from 1,4-dihydroxy-2-naphthoate: step 2/2. Its pathway is cofactor biosynthesis; ubiquinone biosynthesis. In terms of biological role, methyltransferase required for the conversion of demethylmenaquinol (DMKH2) to menaquinol (MKH2) and the conversion of 2-polyprenyl-6-methoxy-1,4-benzoquinol (DDMQH2) to 2-polyprenyl-3-methyl-6-methoxy-1,4-benzoquinol (DMQH2). This is Ubiquinone/menaquinone biosynthesis C-methyltransferase UbiE from Pectobacterium atrosepticum (strain SCRI 1043 / ATCC BAA-672) (Erwinia carotovora subsp. atroseptica).